Reading from the N-terminus, the 162-residue chain is NADH-quinone oxidoreductase subunit I (162 aa).

4Fe-4S ferredoxin-type domains are found at residues 53-83 and 93-122; these read LRRYANGEERCIACKLCEAVCPALAITIEAE and TRYDIDMTKCIYCGLCEEACPVDAIVEGPN. Cys-63, Cys-66, Cys-69, Cys-73, Cys-102, Cys-105, Cys-108, and Cys-112 together coordinate [4Fe-4S] cluster.

The protein belongs to the complex I 23 kDa subunit family. NDH-1 is composed of 14 different subunits. Subunits NuoA, H, J, K, L, M, N constitute the membrane sector of the complex. [4Fe-4S] cluster serves as cofactor.

The protein localises to the cell inner membrane. The enzyme catalyses a quinone + NADH + 5 H(+)(in) = a quinol + NAD(+) + 4 H(+)(out). NDH-1 shuttles electrons from NADH, via FMN and iron-sulfur (Fe-S) centers, to quinones in the respiratory chain. The immediate electron acceptor for the enzyme in this species is believed to be ubiquinone. Couples the redox reaction to proton translocation (for every two electrons transferred, four hydrogen ions are translocated across the cytoplasmic membrane), and thus conserves the redox energy in a proton gradient. This Granulibacter bethesdensis (strain ATCC BAA-1260 / CGDNIH1) protein is NADH-quinone oxidoreductase subunit I.